Reading from the N-terminus, the 463-residue chain is Aromatic amino acid transport protein AroP (463 aa).

12 helical membrane passes run 18–38, 40–60, 84–104, 117–137, 157–177, 200–220, 237–257, 276–296, 337–357, 358–378, 402–422, and 431–451; these read TMMGLGSAIGAGLFLGTGVGI, AAGPAVLLAYIIAGAIVVLVM, FGHWAGFSLGWLYWFMLIMVM, AWFGVEPWIPSLVCVVFFAVV, VAVIIAFLIIGIALIFGWLPG, VAAGLLAVAFAFGGIEIVTIA, AVIWRISVFYLGSVLVITFLM, ILAMANIPGTVGFMEAIIVLA, AVLLSMFFAFVSVGLQYWNPA, GLLDFLLNAVGGCLIVVWAMI, AHPWLGILTLVLLAGLVALML, and VYSVAIVYGFLVLLSFVTVNS.

This sequence belongs to the amino acid-polyamine-organocation (APC) superfamily. Amino acid transporter (AAT) (TC 2.A.3.1) family.

Its subcellular location is the cell membrane. It catalyses the reaction L-phenylalanine(in) + H(+)(in) = L-phenylalanine(out) + H(+)(out). It carries out the reaction L-tryptophan(in) + H(+)(in) = L-tryptophan(out) + H(+)(out). The catalysed reaction is L-tyrosine(in) + H(+)(in) = L-tyrosine(out) + H(+)(out). Functionally, permease that is involved in the active transport across the cytoplasmic membrane of all three aromatic amino acids, phenylalanine, tyrosine and tryptophan. This Corynebacterium glutamicum (strain ATCC 13032 / DSM 20300 / JCM 1318 / BCRC 11384 / CCUG 27702 / LMG 3730 / NBRC 12168 / NCIMB 10025 / NRRL B-2784 / 534) protein is Aromatic amino acid transport protein AroP.